Consider the following 68-residue polypeptide: Large ribosomal subunit protein bL31 (68 aa).

Zn(2+) is bound by residues Cys-16, Cys-18, Cys-36, and Cys-39.

Belongs to the bacterial ribosomal protein bL31 family. Type A subfamily. Part of the 50S ribosomal subunit. The cofactor is Zn(2+).

Binds the 23S rRNA. This is Large ribosomal subunit protein bL31 from Sorangium cellulosum (strain So ce56) (Polyangium cellulosum (strain So ce56)).